Reading from the N-terminus, the 3165-residue chain is ORFB polyprotein (3165 aa).

The Peptidase C8 domain maps to 271-418 (MARSIGLSHE…LENEPDILVG (148 aa)). Catalysis depends on for papain-like protease p48 activity residues C341 and H388. Positions 453-472 (AEPGQRAKDNTNPSTPRPIE) are disordered. The next 6 helical transmembrane spans lie at 791-811 (IMIASSVAFLVPLYFTLYVPY), 823-843 (YILLPPVLWLVWTNLCYGYAC), 1166-1186 (AGLFWWYGCLHLLPFMAAAIM), 1193-1213 (KYLVGMAWLTEPGLLMLKALW), 1215-1235 (FPIFMVTPRWMLPFIVTVSVY), and 1356-1376 (ALGFVFAYMVSWAVYLVLRPP). Residues 1793–2208 (FYKSRKALKQ…AEDSADYRAW (416 aa)) are RNA-directed RNA polymerase. Transmembrane regions (helical) follow at residues 2495–2515 (VRIYQGMTVIISAMYFAMHWV), 2517–2537 (LFIQSLFLIGPLYNLFMWSFW), and 2590–2610 (LGIVPVTLVLDGLAEIIEVLF). Residues 2651 to 2796 (ATKAIEHGHV…IPFLEPTLPK (146 aa)) enclose the Helicase ATP-binding domain. Position 2664–2671 (2664–2671 (AKTASGKS)) interacts with ATP. Residues 2751–2754 (DEFH) carry the DEFH box motif.

It in the C-terminal section; belongs to the DEAD box helicase family. In terms of processing, papain-like protease p48 is autocatalytically processed. The putative RNA-directed RNA polymerase/helicase may be further processed.

It is found in the host membrane. The catalysed reaction is RNA(n) + a ribonucleoside 5'-triphosphate = RNA(n+1) + diphosphate. It catalyses the reaction ATP + H2O = ADP + phosphate + H(+). Functionally, papain-like protease p48 is a cysteine protease of the peptidase family C8. The chain is ORFB polyprotein from Cryphonectria hypovirus 1 (strain EP713) (CHV-1/EP713).